A 278-amino-acid polypeptide reads, in one-letter code: Toxin coregulated pilus biosynthesis protein D (278 aa).

A helical transmembrane segment spans residues 30–50; that stretch reads LLVAIIFLVLSILGGGAYLYY.

The protein localises to the cell membrane. Involved in TCP pilus biogenesis. This chain is Toxin coregulated pilus biosynthesis protein D (tcpD), found in Vibrio cholerae serotype O1 (strain ATCC 39315 / El Tor Inaba N16961).